A 471-amino-acid chain; its full sequence is Glutamate--tRNA ligase (471 aa).

The 'HIGH' region motif lies at Pro-9–Gly-19. 4 residues coordinate Zn(2+): Cys-98, Cys-100, Cys-125, and His-127. The 'KMSKS' region motif lies at Lys-237 to Arg-241. Lys-240 lines the ATP pocket.

Belongs to the class-I aminoacyl-tRNA synthetase family. Glutamate--tRNA ligase type 1 subfamily. Monomer. The cofactor is Zn(2+).

It is found in the cytoplasm. It carries out the reaction tRNA(Glu) + L-glutamate + ATP = L-glutamyl-tRNA(Glu) + AMP + diphosphate. Functionally, catalyzes the attachment of glutamate to tRNA(Glu) in a two-step reaction: glutamate is first activated by ATP to form Glu-AMP and then transferred to the acceptor end of tRNA(Glu). The sequence is that of Glutamate--tRNA ligase from Escherichia coli O9:H4 (strain HS).